The primary structure comprises 382 residues: UDP-N-acetylglucosamine--N-acetylmuramyl-(pentapeptide) pyrophosphoryl-undecaprenol N-acetylglucosamine transferase (382 aa).

UDP-N-acetyl-alpha-D-glucosamine is bound by residues 17–19, Asn137, Arg179, Ser213, and Gln308; that span reads TAG.

It belongs to the glycosyltransferase 28 family. MurG subfamily.

Its subcellular location is the cell membrane. The catalysed reaction is di-trans,octa-cis-undecaprenyl diphospho-N-acetyl-alpha-D-muramoyl-L-alanyl-D-glutamyl-meso-2,6-diaminopimeloyl-D-alanyl-D-alanine + UDP-N-acetyl-alpha-D-glucosamine = di-trans,octa-cis-undecaprenyl diphospho-[N-acetyl-alpha-D-glucosaminyl-(1-&gt;4)]-N-acetyl-alpha-D-muramoyl-L-alanyl-D-glutamyl-meso-2,6-diaminopimeloyl-D-alanyl-D-alanine + UDP + H(+). It functions in the pathway cell wall biogenesis; peptidoglycan biosynthesis. In terms of biological role, cell wall formation. Catalyzes the transfer of a GlcNAc subunit on undecaprenyl-pyrophosphoryl-MurNAc-pentapeptide (lipid intermediate I) to form undecaprenyl-pyrophosphoryl-MurNAc-(pentapeptide)GlcNAc (lipid intermediate II). The polypeptide is UDP-N-acetylglucosamine--N-acetylmuramyl-(pentapeptide) pyrophosphoryl-undecaprenol N-acetylglucosamine transferase (Rhodococcus jostii (strain RHA1)).